A 307-amino-acid polypeptide reads, in one-letter code: MRIVFAGTPDFAVPSLRSVTQRADVVAVYTQPDRPAGRGRELTPSPVKLEAVARGLPVYQPQTLRSPEMLEQLRALRPDLIVVVAYGVILPEAVLAIPDDGCWNVHASLLPRWRGAAPIQRAIEAGDTETGVCLMQMEAGLDTGPVLMSLKTPINAYETSGQLHDRLAEMGAQLLSDGLGLLRAGLRPVPQPQLAAGVTYAHKLGKVEAQLDWEQPAERLACRVRAFQPWPVAEVVLCGERVRIHEALALDLDHSQPPGTVLAASKEGIDVACLQGALRLCRLQREGGKAITAADYLNARRDLQVRA.

Residue 108-111 (SLLP) participates in (6S)-5,6,7,8-tetrahydrofolate binding.

This sequence belongs to the Fmt family.

The catalysed reaction is L-methionyl-tRNA(fMet) + (6R)-10-formyltetrahydrofolate = N-formyl-L-methionyl-tRNA(fMet) + (6S)-5,6,7,8-tetrahydrofolate + H(+). Attaches a formyl group to the free amino group of methionyl-tRNA(fMet). The formyl group appears to play a dual role in the initiator identity of N-formylmethionyl-tRNA by promoting its recognition by IF2 and preventing the misappropriation of this tRNA by the elongation apparatus. This Xylella fastidiosa (strain 9a5c) protein is Methionyl-tRNA formyltransferase.